A 476-amino-acid polypeptide reads, in one-letter code: 3-isopropylmalate dehydratase large subunit (476 aa).

3 residues coordinate [4Fe-4S] cluster: Cys347, Cys407, and Cys410. The segment at 418–442 is disordered; the sequence is LAPGERSASTSNRNFEGRQGKGGRT.

The protein belongs to the aconitase/IPM isomerase family. LeuC type 1 subfamily. In terms of assembly, heterodimer of LeuC and LeuD. Requires [4Fe-4S] cluster as cofactor.

The catalysed reaction is (2R,3S)-3-isopropylmalate = (2S)-2-isopropylmalate. It functions in the pathway amino-acid biosynthesis; L-leucine biosynthesis; L-leucine from 3-methyl-2-oxobutanoate: step 2/4. Its function is as follows. Catalyzes the isomerization between 2-isopropylmalate and 3-isopropylmalate, via the formation of 2-isopropylmaleate. The sequence is that of 3-isopropylmalate dehydratase large subunit from Streptomyces coelicolor (strain ATCC BAA-471 / A3(2) / M145).